The following is an 83-amino-acid chain: Small ribosomal subunit protein bS18 (83 aa).

This sequence belongs to the bacterial ribosomal protein bS18 family. As to quaternary structure, part of the 30S ribosomal subunit. Forms a tight heterodimer with protein bS6.

Binds as a heterodimer with protein bS6 to the central domain of the 16S rRNA, where it helps stabilize the platform of the 30S subunit. The polypeptide is Small ribosomal subunit protein bS18 (Desulfosudis oleivorans (strain DSM 6200 / JCM 39069 / Hxd3) (Desulfococcus oleovorans)).